The following is a 244-amino-acid chain: Cobalt transport protein CbiM (244 aa).

The first 20 residues, Met1–Ala20, serve as a signal peptide directing secretion. A run of 6 helical transmembrane segments spans residues Lys31 to Ile51, Ile63 to Val83, Leu95 to Phe115, Ala117 to Val137, Val161 to Ala181, and Ile201 to Leu221.

It belongs to the CbiM family. Forms an energy-coupling factor (ECF) transporter complex composed of an ATP-binding protein (A component, CbiO), a transmembrane protein (T component, CbiQ) and 2 possible substrate-capture proteins (S components, CbiM and CbiN) of unknown stoichimetry.

The protein resides in the cell membrane. It participates in cofactor biosynthesis; adenosylcobalamin biosynthesis. In terms of biological role, part of the energy-coupling factor (ECF) transporter complex CbiMNOQ involved in cobalt import. The protein is Cobalt transport protein CbiM of Thermosediminibacter oceani (strain ATCC BAA-1034 / DSM 16646 / JW/IW-1228P).